A 248-amino-acid polypeptide reads, in one-letter code: Ribosomal RNA small subunit methyltransferase J (248 aa).

S-adenosyl-L-methionine-binding positions include 98 to 99 (RD), 114 to 115 (ER), 150 to 151 (SS), and Asp-168.

The protein belongs to the methyltransferase superfamily. RsmJ family.

Its subcellular location is the cytoplasm. The enzyme catalyses guanosine(1516) in 16S rRNA + S-adenosyl-L-methionine = N(2)-methylguanosine(1516) in 16S rRNA + S-adenosyl-L-homocysteine + H(+). In terms of biological role, specifically methylates the guanosine in position 1516 of 16S rRNA. The chain is Ribosomal RNA small subunit methyltransferase J from Shewanella amazonensis (strain ATCC BAA-1098 / SB2B).